We begin with the raw amino-acid sequence, 179 residues long: Large ribosomal subunit protein uL16m (179 aa).

Belongs to the universal ribosomal protein uL16 family. Component of the mitochondrial ribosome large subunit.

Its subcellular location is the mitochondrion. This is Large ribosomal subunit protein uL16m (RPL16) from Arabidopsis thaliana (Mouse-ear cress).